A 155-amino-acid chain; its full sequence is Deoxyuridine 5'-triphosphate nucleotidohydrolase (155 aa).

Substrate contacts are provided by residues 74–76 (RSG), Asn-87, and 91–93 (LID).

This sequence belongs to the dUTPase family. Mg(2+) serves as cofactor.

It catalyses the reaction dUTP + H2O = dUMP + diphosphate + H(+). The protein operates within pyrimidine metabolism; dUMP biosynthesis; dUMP from dCTP (dUTP route): step 2/2. Its function is as follows. This enzyme is involved in nucleotide metabolism: it produces dUMP, the immediate precursor of thymidine nucleotides and it decreases the intracellular concentration of dUTP so that uracil cannot be incorporated into DNA. This Xanthomonas oryzae pv. oryzae (strain MAFF 311018) protein is Deoxyuridine 5'-triphosphate nucleotidohydrolase.